The following is a 387-amino-acid chain: Succinate--CoA ligase [ADP-forming] subunit beta (387 aa).

Residues Lys9–Leu244 form the ATP-grasp domain. Residues Lys46, Gly53–Gly55, Gly102, and Glu107 each bind ATP. Mg(2+)-binding residues include Asn199 and Asp213. Residues Asn264 and Gly321–Val323 each bind substrate.

The protein belongs to the succinate/malate CoA ligase beta subunit family. In terms of assembly, heterotetramer of two alpha and two beta subunits. It depends on Mg(2+) as a cofactor.

It carries out the reaction succinate + ATP + CoA = succinyl-CoA + ADP + phosphate. The enzyme catalyses GTP + succinate + CoA = succinyl-CoA + GDP + phosphate. The protein operates within carbohydrate metabolism; tricarboxylic acid cycle; succinate from succinyl-CoA (ligase route): step 1/1. Its function is as follows. Succinyl-CoA synthetase functions in the citric acid cycle (TCA), coupling the hydrolysis of succinyl-CoA to the synthesis of either ATP or GTP and thus represents the only step of substrate-level phosphorylation in the TCA. The beta subunit provides nucleotide specificity of the enzyme and binds the substrate succinate, while the binding sites for coenzyme A and phosphate are found in the alpha subunit. This Xylella fastidiosa (strain M23) protein is Succinate--CoA ligase [ADP-forming] subunit beta.